We begin with the raw amino-acid sequence, 226 residues long: Deoxyribose-phosphate aldolase (226 aa).

D96 (proton donor/acceptor) is an active-site residue. K157 serves as the catalytic Schiff-base intermediate with acetaldehyde. The active-site Proton donor/acceptor is K185.

This sequence belongs to the DeoC/FbaB aldolase family. DeoC type 1 subfamily.

The protein localises to the cytoplasm. The catalysed reaction is 2-deoxy-D-ribose 5-phosphate = D-glyceraldehyde 3-phosphate + acetaldehyde. It participates in carbohydrate degradation; 2-deoxy-D-ribose 1-phosphate degradation; D-glyceraldehyde 3-phosphate and acetaldehyde from 2-deoxy-alpha-D-ribose 1-phosphate: step 2/2. In terms of biological role, catalyzes a reversible aldol reaction between acetaldehyde and D-glyceraldehyde 3-phosphate to generate 2-deoxy-D-ribose 5-phosphate. In Trichormus variabilis (strain ATCC 29413 / PCC 7937) (Anabaena variabilis), this protein is Deoxyribose-phosphate aldolase.